We begin with the raw amino-acid sequence, 314 residues long: Palmitoyl-protein thioesterase 1 (314 aa).

A signal peptide spans 1 to 25 (MISICCSRFSCILFLLFLIFSLVLS). 3 disulfides stabilise this stretch: Cys53–Cys54, Cys104–Cys136, and Cys160–Cys168. The active-site Nucleophile is Ser123. A glycan (N-linked (GlcNAc...) asparagine) is linked at Asn240. Active-site residues include Asp241 and His295.

Belongs to the palmitoyl-protein thioesterase family. As to expression, ubiquitously expressed.

The protein resides in the lysosome. The catalysed reaction is S-hexadecanoyl-L-cysteinyl-[protein] + H2O = L-cysteinyl-[protein] + hexadecanoate + H(+). In terms of biological role, cleaves thioester-linked long fatty acyl groups such as palmitate from modified cysteine residues in proteins or peptides. This Drosophila melanogaster (Fruit fly) protein is Palmitoyl-protein thioesterase 1 (Ppt1).